The chain runs to 293 residues: MQSVVFPNKILPYLLVAPQIILTVIFFFWPASQALYQSTMREDAFGLSSNFVGLANFSAVLSDESYLNSLKVTVIFSVLTALVSMGLALLLATAADRVVRGKGFYRTMMIMPYAVAPAVAGMLWLFMFNPAMGTLSYILRRNGIMWDPLLDGNQAMLLVVAAAAWKQISYNFLFFVAGLQAIPKSLLEAASIDGARGSRRFWTIVFPLLAPTTFFLLVVNTVYAFFDTFGIIHAVTGGGPAKATETLVYKVYNDGFVNLNLGSSAAQSVILMVIVIALTAFQFRFVEKRVHYG.

6 consecutive transmembrane segments (helical) span residues 10–30, 72–92, 108–128, 156–176, 204–224, and 261–281; these read ILPY…FFWP, VTVI…LLLA, MMIM…LFMF, MLLV…LFFV, IVFP…TVYA, and LGSS…LTAF. Residues 66–282 form the ABC transmembrane type-1 domain; sequence YLNSLKVTVI…VIVIALTAFQ (217 aa).

This sequence belongs to the binding-protein-dependent transport system permease family. The complex is composed of two ATP-binding proteins (UgpC), two transmembrane proteins (UgpA and UgpE) and a solute-binding protein (UgpB).

The protein resides in the cell inner membrane. Its function is as follows. Part of the ABC transporter complex UgpBAEC involved in sn-glycerol-3-phosphate (G3P) import. Probably responsible for the translocation of the substrate across the membrane. This is sn-glycerol-3-phosphate transport system permease protein UgpA (ugpA) from Agrobacterium fabrum (strain C58 / ATCC 33970) (Agrobacterium tumefaciens (strain C58)).